We begin with the raw amino-acid sequence, 793 residues long: Endonuclease MutS2 (793 aa).

335–342 is a binding site for ATP; sequence GPNTGGKT. Residues 718–793 enclose the Smr domain; sequence IDVRGYNLEE…ESGVTIVELR (76 aa).

Belongs to the DNA mismatch repair MutS family. MutS2 subfamily. As to quaternary structure, homodimer. Binds to stalled ribosomes, contacting rRNA.

Endonuclease that is involved in the suppression of homologous recombination and thus may have a key role in the control of bacterial genetic diversity. Functionally, acts as a ribosome collision sensor, splitting the ribosome into its 2 subunits. Detects stalled/collided 70S ribosomes which it binds and splits by an ATP-hydrolysis driven conformational change. Acts upstream of the ribosome quality control system (RQC), a ribosome-associated complex that mediates the extraction of incompletely synthesized nascent chains from stalled ribosomes and their subsequent degradation. Probably generates substrates for RQC. The protein is Endonuclease MutS2 of Acetivibrio thermocellus (strain ATCC 27405 / DSM 1237 / JCM 9322 / NBRC 103400 / NCIMB 10682 / NRRL B-4536 / VPI 7372) (Clostridium thermocellum).